Consider the following 553-residue polypeptide: Ribonuclease J 2 (553 aa).

Positions 69, 71, 138, and 160 each coordinate Zn(2+). 361–365 (RVSGH) serves as a coordination point for substrate.

The protein belongs to the metallo-beta-lactamase superfamily. RNA-metabolizing metallo-beta-lactamase-like family. Bacterial RNase J subfamily. Homodimer, may be a subunit of the RNA degradosome. The cofactor is Zn(2+).

It localises to the cytoplasm. An RNase that has 5'-3' exonuclease and possibly endonuclease activity. Involved in maturation of rRNA and in some organisms also mRNA maturation and/or decay. Has an overlapping but not completely redundant role with RNase J1 in the decay of mRNA. The sequence is that of Ribonuclease J 2 from Streptococcus pyogenes serotype M3 (strain ATCC BAA-595 / MGAS315).